Here is a 252-residue protein sequence, read N- to C-terminus: T-box transcription factor mls-1 (252 aa).

The segment at residues 40–210 (LWRRFHNLGT…SNPFAKGFRE (171 aa)) is a DNA-binding region (T-box).

As to quaternary structure, may interact with unc-37.

It is found in the nucleus. In terms of biological role, probable transcription factor required for the cell fate specification of non-striated uterine muscle precursor cells. Furthermore, may function with the transcriptional corepressor unc-37. The polypeptide is T-box transcription factor mls-1 (Caenorhabditis elegans).